We begin with the raw amino-acid sequence, 275 residues long: Peflin (275 aa).

8 tandem repeats follow at residues 21 to 29 (PPGGYYPGP), 31 to 39 (HGGGQYGSG), 41 to 49 (PPGGGYGAP), 50 to 59 (APGGPYGYPS), 60 to 68 (AGGVPSGTP), 76 to 84 (PPGGPYGQL), 85 to 91 (PPGGPYG), and 92 to 100 (TQPGHYGQG). 2 disordered regions span residues 21–45 (PPGG…PGGG) and 59–103 (SAGG…GGVP). The 8 X 9 AA approximate tandem repeat of [AP]-P-G-G-P-Y-G-G-P-P stretch occupies residues 21 to 100 (PPGGYYPGPP…GTQPGHYGQG (80 aa)). A compositionally biased stretch (gly residues) spans 31–45 (HGGGQYGSGLPPGGG). Over residues 59–70 (SAGGVPSGTPSG) the composition is skewed to low complexity. 5 EF-hand domains span residues 105 to 140 (NVDP…SNWS), 146 to 174 (TCLM…WKFL), 172 to 207 (KFLQ…MGYN), 208 to 244 (LSPQ…LQVL), and 245 to 274 (TEAF…ASRM). 5 residues coordinate Ca(2+): Asp118, Asp120, Ser122, Tyr124, and Glu129. Ca(2+) is bound by residues Asp185, Asp187, Ser189, Ser191, and Glu196. Residues 195-275 (TELQQALSQM…FVTMTASRML (81 aa)) are required for interaction with PDCD6.

Heterodimer; heterodimerizes (via the EF-hand 5) with PDCD6. Dissociates from PDCD6 in presence of calcium. In terms of processing, ubiquitinated by the BCR(KLHL12) E3 ubiquitin ligase complex.

Its subcellular location is the cytoplasm. It is found in the endoplasmic reticulum. It localises to the membrane. The protein resides in the cytoplasmic vesicle. The protein localises to the COPII-coated vesicle membrane. Its function is as follows. Calcium-binding protein that acts as an adapter that bridges unrelated proteins or stabilizes weak protein-protein complexes in response to calcium. Together with PDCD6, acts as a calcium-dependent adapter for the BCR(KLHL12) complex, a complex involved in endoplasmic reticulum (ER)-Golgi transport by regulating the size of COPII coats. In response to cytosolic calcium increase, the heterodimer formed with PDCD6 interacts with, and bridges together the BCR(KLHL12) complex and SEC31 (SEC31A or SEC31B), promoting monoubiquitination of SEC31 and subsequent collagen export, which is required for neural crest specification. Its role in the heterodimer formed with PDCD6 is however unclear: some evidence shows that PEF1 and PDCD6 work together and promote association between PDCD6 and SEC31 in presence of calcium. Other reports show that PEF1 dissociates from PDCD6 in presence of calcium, and may act as a negative regulator of PDCD6. Also acts as a negative regulator of ER-Golgi transport; possibly by inhibiting interaction between PDCD6 and SEC31. This chain is Peflin, found in Mus musculus (Mouse).